The primary structure comprises 198 residues: MSISLLGRIVSQQFSGIRAAGPGRSLYLPFTLLLKQPGAYKVTLHRYVHSTQTKSHLSFLMNNNDITPFQKFTVKVLKEQCKSRGLKLSGRKSDLLQRLITHDSCSNKKSSVKINEPKKKRILINDPIKITKKLVSDKTFRTIEKNISSLQNTPVIETPCDVHSHLQPRDRIFLLGFFMLSCLWWNLEPQESKPTIDH.

The N-terminal 55 residues, 1–55 (MSISLLGRIVSQQFSGIRAAGPGRSLYLPFTLLLKQPGAYKVTLHRYVHSTQTKS), are a transit peptide targeting the mitochondrion. Positions 69–103 (FQKFTVKVLKEQCKSRGLKLSGRKSDLLQRLITHD) constitute an SAP domain. A helical membrane pass occupies residues 172 to 187 (IFLLGFFMLSCLWWNL).

The protein belongs to the AIM34 family.

It localises to the mitochondrion membrane. The protein is Altered inheritance of mitochondria protein 34, mitochondrial (AIM34) of Saccharomyces cerevisiae (strain Lalvin EC1118 / Prise de mousse) (Baker's yeast).